Reading from the N-terminus, the 130-residue chain is Small ribosomal subunit protein uS8 (130 aa).

Belongs to the universal ribosomal protein uS8 family. Part of the 30S ribosomal subunit.

Functionally, one of the primary rRNA binding proteins, it binds directly to 16S rRNA central domain where it helps coordinate assembly of the platform of the 30S subunit. This chain is Small ribosomal subunit protein uS8, found in Natronomonas pharaonis (strain ATCC 35678 / DSM 2160 / CIP 103997 / JCM 8858 / NBRC 14720 / NCIMB 2260 / Gabara) (Halobacterium pharaonis).